The sequence spans 1431 residues: Caskin-1 (1431 aa).

ANK repeat units lie at residues 48–77 (DGFS…AVDI), 81–110 (KGMR…AVNV), 114–143 (EGHI…NPCM), 147–176 (SGKT…CAAL), 188–217 (NGTS…DINR), and 220–249 (KSGT…NAQV). Tyr-253 carries the post-translational modification Phosphotyrosine. The region spanning 281-347 (SAALQVRATK…PSSLGEAIVK (67 aa)) is the SH3 domain. The tract at residues 348 to 372 (RAGSRTGSEPSPPQGGGSLGPSAPP) is disordered. A Phosphoserine modification is found at Ser-358. The segment at 375–471 (IWVLRKPFAG…PKKLESASAS (97 aa)) is CASK-binding. At Arg-398 the chain carries Omega-N-methylarginine. Residues 420 to 430 (SQKSVSESSPG) are compositionally biased toward polar residues. The interval 420–471 (SQKSVSESSPGDSPVKPPEGSSGAARSQPPAAHAGQVYGEQPPKKLESASAS) is disordered. Ser-423 and Ser-432 each carry phosphoserine. 2 SAM domains span residues 476–539 (KSAE…LNIP) and 545–609 (HKPA…LAEL). Phosphoserine is present on residues Ser-637 and Ser-650. Over residues 669–679 (LSGPAEAGAAA) the composition is skewed to low complexity. 2 disordered regions span residues 669 to 1000 (LSGP…TGSA) and 1016 to 1041 (GGGG…EPGR). The span at 692–712 (RTTSRESSLSGRARHISSSQE) shows a compositional bias: polar residues. 2 positions are modified to phosphoserine: Ser-723 and Ser-728. A Phosphothreonine modification is found at Thr-741. At Ser-791 the chain carries Phosphoserine. The segment covering 848–860 (PPAPGPAPPPVPA) has biased composition (pro residues). Phosphoserine occurs at positions 891, 893, and 989. Over residues 1028–1037 (GHPTPRPASP) the composition is skewed to pro residues. Thr-1067 is subject to Phosphothreonine. At Ser-1069 the chain carries Phosphoserine. 2 disordered regions span residues 1072–1372 (VTGL…RQKL) and 1389–1410 (KIRQ…STGS). A compositionally biased stretch (basic and acidic residues) spans 1148-1160 (DTVKRRPKAKEPD). The span at 1191–1215 (PELPPPPPPAEPPPADLMQLPPLPL) shows a compositional bias: pro residues. Over residues 1236–1247 (QPVSKIQGSPTP) the composition is skewed to polar residues. Phosphoserine is present on Ser-1259. Thr-1268 is subject to Phosphothreonine. Pro residues predominate over residues 1268–1283 (TPPPVSPKPPPPPTAP). Low complexity-rich tracts occupy residues 1284–1299 (KPAK…SATP), 1309–1327 (PPAA…SASP), and 1345–1359 (PRAA…PVAS). Ser-1363 carries the phosphoserine modification. A compositionally biased stretch (basic and acidic residues) spans 1389–1407 (KIRQEDGQGPRPSSIEEKS).

As to quaternary structure, binds the CaM kinase domain of CASK. Forms a ternary complex with CASK and LIN7A, LIN7B or LIN7C. Competes with APBA1 that forms a similar complex with CASK and LIN7 proteins. The tripartite complex CASKIN1/CASK/LIN7(A/B/C) binds the cytoplasmic tail of NRXN1. Polymerizes, via the tandem SAM domains, to form long, 8 nM wide fibers, upon which other proteins can assemble.

The protein localises to the cytoplasm. In terms of biological role, may link the scaffolding protein CASK to downstream intracellular effectors. The sequence is that of Caskin-1 (Caskin1) from Mus musculus (Mouse).